The sequence spans 135 residues: Mediator of RNA polymerase II transcription subunit 10 (135 aa).

Belongs to the Mediator complex subunit 10 family. In terms of assembly, component of the Mediator complex, which is composed of MED1, MED4, MED6, MED7, MED8, MED9, MED10, MED11, MED12, MED13, MED13L, MED14, MED15, MED16, MED17, MED18, MED19, MED20, MED21, MED22, MED23, MED24, MED25, MED26, MED27, MED29, MED30, MED31, CCNC, CDK8 and CDC2L6/CDK11. The MED12, MED13, CCNC and CDK8 subunits form a distinct module termed the CDK8 module. Mediator containing the CDK8 module is less active than Mediator lacking this module in supporting transcriptional activation. Individual preparations of the Mediator complex lacking one or more distinct subunits have been variously termed ARC, CRSP, DRIP, PC2, SMCC and TRAP.

Its subcellular location is the nucleus. Its function is as follows. Component of the Mediator complex, a coactivator involved in the regulated transcription of nearly all RNA polymerase II-dependent genes. Mediator functions as a bridge to convey information from gene-specific regulatory proteins to the basal RNA polymerase II transcription machinery. Mediator is recruited to promoters by direct interactions with regulatory proteins and serves as a scaffold for the assembly of a functional preinitiation complex with RNA polymerase II and the general transcription factors. The protein is Mediator of RNA polymerase II transcription subunit 10 (MED10) of Macaca fascicularis (Crab-eating macaque).